An 81-amino-acid polypeptide reads, in one-letter code: Large ribosomal subunit protein bL27 (81 aa).

Residues 1–11 (MATSKSGGSSK) show a composition bias toward polar residues. Residues 1–24 (MATSKSGGSSKNGRDSISKRLGVK) are disordered.

It belongs to the bacterial ribosomal protein bL27 family.

This Borrelia duttonii (strain Ly) protein is Large ribosomal subunit protein bL27.